Consider the following 161-residue polypeptide: Endoribonuclease YbeY (161 aa).

His121, His125, and His131 together coordinate Zn(2+).

This sequence belongs to the endoribonuclease YbeY family. The cofactor is Zn(2+).

Its subcellular location is the cytoplasm. Functionally, single strand-specific metallo-endoribonuclease involved in late-stage 70S ribosome quality control and in maturation of the 3' terminus of the 16S rRNA. The sequence is that of Endoribonuclease YbeY from Bordetella avium (strain 197N).